A 148-amino-acid chain; its full sequence is Single-stranded DNA-binding protein, mitochondrial (148 aa).

Residues 1 to 16 (MFRRPVVQVLRQFVRH) constitute a mitochondrion transit peptide. Positions 30-141 (LNRVQLLGRV…IIADNIIFLS (112 aa)) constitute an SSB domain. 2 positions are modified to phosphoserine: Ser-67 and Ser-79. Lys-113 bears the N6-acetyllysine mark. Position 122 is an N6-succinyllysine (Lys-122).

Homotetramer. Interacts with MPG/AAG, through inhibition of its glycosylase activity it potentially prevents formation of DNA breaks in ssDNA, ensuring that base removal primarily occurs in dsDNA. Interacts with POLDIP2. Interacts with PRIMPOL.

Its subcellular location is the mitochondrion. The protein localises to the mitochondrion matrix. It is found in the mitochondrion nucleoid. Binds preferentially and cooperatively to pyrimidine rich single-stranded DNA (ss-DNA). In vitro, required to maintain the copy number of mitochondrial DNA (mtDNA) and plays a crucial role during mtDNA replication by stimulating the activity of the replisome components POLG and TWNK at the replication fork. Promotes the activity of the gamma complex polymerase POLG, largely by organizing the template DNA and eliminating secondary structures to favor ss-DNA conformations that facilitate POLG activity. In addition it is able to promote the 5'-3' unwinding activity of the mtDNA helicase TWNK. May also function in mtDNA repair. This is Single-stranded DNA-binding protein, mitochondrial (SSBP1) from Bos taurus (Bovine).